The sequence spans 92 residues: Putative regulatory protein CKL_1364 (92 aa).

The protein belongs to the RemA family.

The sequence is that of Putative regulatory protein CKL_1364 from Clostridium kluyveri (strain ATCC 8527 / DSM 555 / NBRC 12016 / NCIMB 10680 / K1).